The sequence spans 417 residues: UDP-N-acetylmuramoylalanine--D-glutamate ligase (417 aa).

ATP is bound at residue 101–107; the sequence is GTAGKTS.

This sequence belongs to the MurCDEF family.

It localises to the cytoplasm. The enzyme catalyses UDP-N-acetyl-alpha-D-muramoyl-L-alanine + D-glutamate + ATP = UDP-N-acetyl-alpha-D-muramoyl-L-alanyl-D-glutamate + ADP + phosphate + H(+). It functions in the pathway cell wall biogenesis; peptidoglycan biosynthesis. Its function is as follows. Cell wall formation. Catalyzes the addition of glutamate to the nucleotide precursor UDP-N-acetylmuramoyl-L-alanine (UMA). This is UDP-N-acetylmuramoylalanine--D-glutamate ligase from Thermus thermophilus (strain ATCC BAA-163 / DSM 7039 / HB27).